The chain runs to 670 residues: Proline-rich receptor-like protein kinase PERK5 (670 aa).

A disordered region spans residues 1–181; the sequence is MADSPVDSSP…SGDSDSSSGN (181 aa). Over 1 to 186 the chain is Extracellular; that stretch reads MADSPVDSSP…SSSGNHPQAN (186 aa). Positions 14 to 31 are enriched in low complexity; that stretch reads TSNGTPPSNGTSPSNESS. Residues Asn22 and Asn28 are each glycosylated (N-linked (GlcNAc...) asparagine). Composition is skewed to pro residues over residues 32-62 and 84-109; these read PPTP…PAPP and PQTP…PPQT. Asn130 carries an N-linked (GlcNAc...) asparagine glycan. Positions 132 to 141 are enriched in low complexity; it reads TNGGNNNRDG. Asn151 is a glycosylation site (N-linked (GlcNAc...) asparagine). Low complexity predominate over residues 167 to 181; it reads SPPQNSGDSDSSSGN. Residues 187–207 traverse the membrane as a helical segment; that stretch reads IGLIIGVLVGAGLLLLLAVCI. Residues 208 to 670 lie on the Cytoplasmic side of the membrane; the sequence is CICCNRKKKK…RGSMKRNPQL (463 aa). Position 301 is a phosphothreonine (Thr301). The 279-residue stretch at 312-590 folds into the Protein kinase domain; sequence FAQSNLLGQG…VRALEGDMSM (279 aa). ATP is bound by residues 318–326 and Lys340; that span reads LGQGGFGYV. Tyr385 carries the post-translational modification Phosphotyrosine. Asp436 (proton acceptor) is an active-site residue. Ser469 carries the phosphoserine modification. Phosphothreonine is present on residues Thr470 and Thr475. The residue at position 483 (Tyr483) is a Phosphotyrosine. 2 disordered regions span residues 589–613 and 635–670; these read SMDD…VSSE and EYQS…NPQL. Over residues 599-613 the composition is skewed to polar residues; it reads PGQSTYLSPGSVSSE.

Belongs to the protein kinase superfamily. Ser/Thr protein kinase family. In terms of tissue distribution, mostly expressed in flower buds.

The protein localises to the cell membrane. It catalyses the reaction L-seryl-[protein] + ATP = O-phospho-L-seryl-[protein] + ADP + H(+). The enzyme catalyses L-threonyl-[protein] + ATP = O-phospho-L-threonyl-[protein] + ADP + H(+). This is Proline-rich receptor-like protein kinase PERK5 (PERK5) from Arabidopsis thaliana (Mouse-ear cress).